The primary structure comprises 757 residues: Tyrosine-protein kinase HTK16 (757 aa).

The SH2 1 domain occupies 10–102 (WYHGKITREV…GLPCKLVDFC (93 aa)). ANK repeat units follow at residues 115–147 (GLDT…NVNA), 151–180 (SGLT…DASA), 184–214 (NGRT…DFLK), 219–248 (NGWV…SMYP), and 252–281 (DGDT…NQPK). Positions 287-379 (WLHQNLDRNG…GLPTLLQFPV (93 aa)) constitute an SH2 2 domain. Disordered stretches follow at residues 381 to 407 (SAEN…PSRP) and 444 to 467 (PKLP…QKGD). A compositionally biased stretch (polar residues) spans 455 to 467 (EVPNSVNVGQKGD). Residues 484 to 740 (ISFGKELGVG…PTFNELHSTF (257 aa)) enclose the Protein kinase domain. Residues 490 to 498 (LGVGEFGSV) and K516 contribute to the ATP site. D608 (proton acceptor) is an active-site residue. Y746 is subject to Phosphotyrosine.

It belongs to the protein kinase superfamily. Tyr protein kinase family. In terms of tissue distribution, epithelial cells.

It catalyses the reaction L-tyrosyl-[protein] + ATP = O-phospho-L-tyrosyl-[protein] + ADP + H(+). Functionally, may be involved in signal transduction. In Hydra vulgaris (Hydra), this protein is Tyrosine-protein kinase HTK16 (HTK16).